The chain runs to 337 residues: MDETGNLTVSSATCHDTIDDFRNQVYSTLYSMISVVGFFGNGFVLYVLIKTYHKKSAFQVYMINLAVADLLCVCTLPLRVVYYVHKGIWLFGDFLCRLSTYALYVNLYCSIFFMTAMSFFRCIAIVFPVQNINLVTQKKARFVCVGIWIFVILTSSPFLMAKPQKDEKNNTKCFEPPQDNQTKNHVLVLHYVSLFVGFIIPFVIIIVCYTMIILTLLKKSMKKNLSSHKKAIGMIMVVTAAFLVSFMPYHIQRTIHLHFLHNETKPCDSVLRMQKSVVITLSLAASNCCFDPLLYFFSGGNFRKRLSTFRKHSLSSVTYVPRKKASLPEKGEEICKV.

The Extracellular portion of the chain corresponds to 1–28; it reads MDETGNLTVSSATCHDTIDDFRNQVYST. N-linked (GlcNAc...) asparagine glycosylation is present at asparagine 6. Residues 29 to 49 traverse the membrane as a helical segment; that stretch reads LYSMISVVGFFGNGFVLYVLI. The Cytoplasmic portion of the chain corresponds to 50-57; it reads KTYHKKSA. The chain crosses the membrane as a helical span at residues 58–78; sequence FQVYMINLAVADLLCVCTLPL. Over 79–106 the chain is Extracellular; that stretch reads RVVYYVHKGIWLFGDFLCRLSTYALYVN. Cysteine 96 and cysteine 173 are joined by a disulfide. Residues 107 to 127 traverse the membrane as a helical segment; sequence LYCSIFFMTAMSFFRCIAIVF. Residues 128–141 lie on the Cytoplasmic side of the membrane; sequence PVQNINLVTQKKAR. A helical membrane pass occupies residues 142-162; the sequence is FVCVGIWIFVILTSSPFLMAK. The Extracellular segment spans residues 163-193; it reads PQKDEKNNTKCFEPPQDNQTKNHVLVLHYVS. N-linked (GlcNAc...) asparagine glycosylation is found at asparagine 169 and asparagine 180. Residues 194 to 214 form a helical membrane-spanning segment; that stretch reads LFVGFIIPFVIIIVCYTMIIL. At 215 to 230 the chain is on the cytoplasmic side; it reads TLLKKSMKKNLSSHKK. A helical membrane pass occupies residues 231–251; that stretch reads AIGMIMVVTAAFLVSFMPYHI. The Extracellular portion of the chain corresponds to 252–276; the sequence is QRTIHLHFLHNETKPCDSVLRMQKS. N-linked (GlcNAc...) asparagine glycosylation occurs at asparagine 262. Residues 277 to 297 form a helical membrane-spanning segment; that stretch reads VVITLSLAASNCCFDPLLYFF. At 298-337 the chain is on the cytoplasmic side; sequence SGGNFRKRLSTFRKHSLSSVTYVPRKKASLPEKGEEICKV.

Belongs to the G-protein coupled receptor 1 family. Widely expressed, with highest levels in spleen and peripheral blood leukocytes. Lower expression in several tissues, such as lung (mostly in smooth muscle bundles and alveolar macrophages), placenta, small intestine, pancreas, colon and heart.

The protein localises to the cell membrane. Functionally, receptor for cysteinyl leukotrienes mediating bronchoconstriction of individuals with and without asthma. Stimulation by LTD4 results in the contraction and proliferation of smooth muscle, edema, eosinophil migration and damage to the mucus layer in the lung. This response is mediated via a G-protein that activates a phosphatidylinositol-calcium second messenger system. The rank order of affinities for the leukotrienes is LTD4 &gt;&gt; LTE4 = LTC4 &gt;&gt; LTB4. In Homo sapiens (Human), this protein is Cysteinyl leukotriene receptor 1 (CYSLTR1).